Reading from the N-terminus, the 599-residue chain is UPF0313 protein UNCMA_01890 (599 aa).

A Radical SAM core domain is found at 281–557; the sequence is EDIPALRTVR…RALLQYKNPE (277 aa). Residues Cys-299, Cys-303, and Cys-306 each contribute to the [4Fe-4S] cluster site.

This sequence belongs to the UPF0313 family. Requires [4Fe-4S] cluster as cofactor.

The protein is UPF0313 protein UNCMA_01890 of Methanocella arvoryzae (strain DSM 22066 / NBRC 105507 / MRE50).